Reading from the N-terminus, the 481-residue chain is Proline--tRNA ligase 2 (481 aa).

This sequence belongs to the class-II aminoacyl-tRNA synthetase family. ProS type 3 subfamily. Homodimer.

The protein localises to the cytoplasm. It catalyses the reaction tRNA(Pro) + L-proline + ATP = L-prolyl-tRNA(Pro) + AMP + diphosphate. Its function is as follows. Catalyzes the attachment of proline to tRNA(Pro) in a two-step reaction: proline is first activated by ATP to form Pro-AMP and then transferred to the acceptor end of tRNA(Pro). This Clostridioides difficile (strain 630) (Peptoclostridium difficile) protein is Proline--tRNA ligase 2.